Reading from the N-terminus, the 1272-residue chain is MTDLSTPQRAGSHKLPAGRRLRFVTAAALFDGHDASINIMRRILQASGVEVIHLGHNRSVDEVATAALHEDADGVAVSSYQGGHNEYFRYLVDLLRARGGERIKVFGGGGGVIVPEEIAGLERYGVEKIYSPQDGQRLGLQGMIDDMIARCAEGARAAAATGESQVGAWAAEFSEHGLPRFDSRDDVGVDRQGAVARNPSSEASRVAAAGRGDHLDRGVRAASTADTADTANTANTANTANTGSVADAADAADAADAADAADAASTASTASTASTASTASTAGIPDPASLVFRRLAQLISAFETAAIDVNTRDKLSALAEVTAIPLLGITGTGGAGKSSLTDELIRRFRLDYGDALTIAVLAIDPSRRKSGGALLGDRIRMNAIGDWGGGARVYMRSMATREASSEISDSLPDALMLCKAAGFDLIVVETSGIGQGNAAIVPFVDESLYVMTPEFGAASQLEKIDMLDFASFVAINKFDRKGARDALRDVAKQVQRNRADFAKSPEAMPVFGTIASRFNDDGVTALYRHVAEALRKHGLRSGGGRLAAPEDLRFSSGRNAIVPPARVRYLADIAQTIHAYRERADAQARLARERWQLIEARRMLVETGEAARSTVATSASPGASASSKANACTSTSSKANASPGANTTANSNASATSGTATPTDALNPTLSQLDTLITQRTASLGERERILLDTWPEIVAAYSGTEHIVRVRDREIRTALTVATLSGSEVRKVSLPKFVDHGEILRWLMLDNLPGYFPFTAGVFPFRRENEDPTRMFAGEGDPQRTNRRFKLLSEGMPAKRLSTAFDSVTLYGEEPHERPDIYGKVGNSGVSVATLDDMKTLYDGFDLCAPETSVSMTINGPAPTILAMFFNVAIDQQIARTTQRQGRPLTEDELAATRRTALENVRGTVQADILKEDQGQNTCIFSTEFSLKVMGDIQAYFVEHGVRNFYSVSISGYHIAEAGANPISQLAYTLANGFTYVEAYLARGMSIDDFAPNLSFFFSNGMDPEYTVLGRVARRIWAVAMRERYGANERSQKLKYHVQTSGRSLHAQEIDFNDIRTTLQALIAIYDNCNSLHTNAFDEAITTPTEESVRRAVAIQLIINREWGLAKNQNPNQGSFVIEELTDLVEEAVLAEFDRLTERGGVLGAMETGYQRGRIQDESMLYEHRKHDGSYPIVGVNTFLSAHPHEAPQPIALARSTDDEKQSQLQRLRAFQAQHRDAAPAALERLKRAVIDDENVFAVLMDVVRVCSLGQITHALFEVGGQYRRNM.

Residues 20–158 (RLRFVTAAAL…ARCAEGARAA (139 aa)) enclose the B12-binding domain. Residue His-33 coordinates adenosylcob(III)alamin. Positions 163-536 (ESQVGAWAAE…YRHVAEALRK (374 aa)) are GTPase chaperone MeaI. The segment at 193-240 (GAVARNPSSEASRVAAAGRGDHLDRGVRAASTADTADTANTANTANTA) is disordered. Positions 221–240 (AASTADTADTANTANTANTA) are enriched in low complexity. Position 334 to 339 (334 to 339 (GAGKSS)) interacts with GTP. Residues Ser-338, Ile-363, Asp-364, and Asp-377 each contribute to the Mg(2+) site. Arg-380 contacts GTP. Positions 429 and 430 each coordinate Mg(2+). 476–479 (NKFD) contributes to the GTP binding site. Residues 537–758 (HGLRSGGGRL…MLDNLPGYFP (222 aa)) are linker. 2 stretches are compositionally biased toward low complexity: residues 614 to 631 (TVAT…KANA) and 639 to 663 (ANAS…ATPT). The interval 614 to 667 (TVATSASPGASASSKANACTSTSSKANASPGANTTANSNASATSGTATPTDALN) is disordered. Substrate contacts are provided by Phe-766, Arg-801, Arg-907, Tyr-951, Ser-1000, Arg-1035, and Lys-1040. GTP-binding residues include Glu-1152 and Asn-1271.

This sequence belongs to the IcmF family. Homodimer. It depends on adenosylcob(III)alamin as a cofactor. Requires Mg(2+) as cofactor.

It carries out the reaction 2-methylpropanoyl-CoA = butanoyl-CoA. It catalyses the reaction GTP + H2O = GDP + phosphate + H(+). In terms of biological role, catalyzes the reversible interconversion of isobutyryl-CoA and n-butyryl-CoA, using radical chemistry. Also exhibits GTPase activity, associated with its G-protein domain (MeaI) that functions as a chaperone that assists cofactor delivery and proper holo-enzyme assembly. Does not exhibit methylmalonyl-CoA mutase (MCM) activity. The chain is Fused isobutyryl-CoA mutase from Paraburkholderia xenovorans (strain LB400).